A 448-amino-acid polypeptide reads, in one-letter code: MSHRYIPLTEKDKQEMLQTIGAKSIGELFGDVPSDILLNRDLNIAEGEAETTLLRRLNRIASKNITKETHTSFLGAGVYDHYAPSVVDAMISRSEFYTAYTPYQPEISQGELQAIFEFQTLICELTDMDVANSSMYDGMTSFAEACILAFSQTKKNKIVVSKGLHYQALQVLHTYAKTRKEFEVVEIDLDGTVTDLKKLEAAVDDETAAVAVQYPNFYGSIEDLKKIHSFIEDKKALFIVYANPLALGLLTPPGSFGADIVVGDTQPFGIPAQFGGPHCGYFATTKKLMRKVPGRLVGQTQDDEGNRGFVLTLQAREQHIRRDKATSNICSNQALNALASSIAMSALGKQGIYDIAVQNIEHANYAKQQFIKKGFEVLDGTSFNEFVVKFDKPIQQVNEELVKYNIIGGFDLGVVSDDFKNHMLIAVTELRTKDEIDTFVEKAGELND.

It belongs to the GcvP family. N-terminal subunit subfamily. As to quaternary structure, the glycine cleavage system is composed of four proteins: P, T, L and H. In this organism, the P 'protein' is a heterodimer of two subunits.

It catalyses the reaction N(6)-[(R)-lipoyl]-L-lysyl-[glycine-cleavage complex H protein] + glycine + H(+) = N(6)-[(R)-S(8)-aminomethyldihydrolipoyl]-L-lysyl-[glycine-cleavage complex H protein] + CO2. The glycine cleavage system catalyzes the degradation of glycine. The P protein binds the alpha-amino group of glycine through its pyridoxal phosphate cofactor; CO(2) is released and the remaining methylamine moiety is then transferred to the lipoamide cofactor of the H protein. The sequence is that of Probable glycine dehydrogenase (decarboxylating) subunit 1 from Staphylococcus aureus (strain COL).